The following is a 422-amino-acid chain: Glucose-1-phosphate adenylyltransferase 2 (422 aa).

Alpha-D-glucose 1-phosphate-binding positions include Tyr-110, Gly-175, 190–191, and Ser-208; that span reads EK.

Belongs to the bacterial/plant glucose-1-phosphate adenylyltransferase family. In terms of assembly, homotetramer.

The enzyme catalyses alpha-D-glucose 1-phosphate + ATP + H(+) = ADP-alpha-D-glucose + diphosphate. Its pathway is glycan biosynthesis; glycogen biosynthesis. Involved in the biosynthesis of ADP-glucose, a building block required for the elongation reactions to produce glycogen. Catalyzes the reaction between ATP and alpha-D-glucose 1-phosphate (G1P) to produce pyrophosphate and ADP-Glc. The protein is Glucose-1-phosphate adenylyltransferase 2 of Alkalilimnicola ehrlichii (strain ATCC BAA-1101 / DSM 17681 / MLHE-1).